A 332-amino-acid polypeptide reads, in one-letter code: uncharacterized protein (332 aa).

Belongs to the peptidase U32 family.

This is an uncharacterized protein from Methanocaldococcus jannaschii (strain ATCC 43067 / DSM 2661 / JAL-1 / JCM 10045 / NBRC 100440) (Methanococcus jannaschii).